Here is a 92-residue protein sequence, read N- to C-terminus: Small ribosomal subunit protein uS19 (92 aa).

The protein belongs to the universal ribosomal protein uS19 family.

Protein S19 forms a complex with S13 that binds strongly to the 16S ribosomal RNA. This chain is Small ribosomal subunit protein uS19, found in Borreliella afzelii (strain PKo) (Borrelia afzelii).